The following is a 477-amino-acid chain: Aspartyl/glutamyl-tRNA(Asn/Gln) amidotransferase subunit B (477 aa).

The protein belongs to the GatB/GatE family. GatB subfamily. In terms of assembly, heterotrimer of A, B and C subunits.

The enzyme catalyses L-glutamyl-tRNA(Gln) + L-glutamine + ATP + H2O = L-glutaminyl-tRNA(Gln) + L-glutamate + ADP + phosphate + H(+). The catalysed reaction is L-aspartyl-tRNA(Asn) + L-glutamine + ATP + H2O = L-asparaginyl-tRNA(Asn) + L-glutamate + ADP + phosphate + 2 H(+). In terms of biological role, allows the formation of correctly charged Asn-tRNA(Asn) or Gln-tRNA(Gln) through the transamidation of misacylated Asp-tRNA(Asn) or Glu-tRNA(Gln) in organisms which lack either or both of asparaginyl-tRNA or glutaminyl-tRNA synthetases. The reaction takes place in the presence of glutamine and ATP through an activated phospho-Asp-tRNA(Asn) or phospho-Glu-tRNA(Gln). The chain is Aspartyl/glutamyl-tRNA(Asn/Gln) amidotransferase subunit B from Lactococcus lactis subsp. cremoris (strain MG1363).